Consider the following 129-residue polypeptide: Small ribosomal subunit protein uS11 (129 aa).

Belongs to the universal ribosomal protein uS11 family. Part of the 30S ribosomal subunit. Interacts with proteins S7 and S18. Binds to IF-3.

Located on the platform of the 30S subunit, it bridges several disparate RNA helices of the 16S rRNA. Forms part of the Shine-Dalgarno cleft in the 70S ribosome. This is Small ribosomal subunit protein uS11 from Methylobacterium nodulans (strain LMG 21967 / CNCM I-2342 / ORS 2060).